The primary structure comprises 508 residues: Adenylosuccinate synthetase 1, chloroplastic (508 aa).

Residues 1–56 (MNISILRLDSNPITTATSPATATANHRSGILGCYNGTYSCRLNQLQQRKKNPSIIV) constitute a chloroplast transit peptide. GTP is bound by residues 95 to 101 (GDEGKGK) and 123 to 125 (GHT). Catalysis depends on Asp96, which acts as the Proton acceptor. Residues Asp96 and Gly123 each contribute to the Mg(2+) site. Residues 96–99 (DEGK), 121–124 (NAGH), Thr213, Arg227, Gln307, Thr322, and Arg386 contribute to the IMP site. His124 (proton donor) is an active-site residue. 382 to 388 (TTTGRPR) serves as a coordination point for substrate. GTP is bound by residues Arg388, 414 to 416 (KLD), and 497 to 499 (GIG).

It belongs to the adenylosuccinate synthetase family. In terms of assembly, homodimer. Mg(2+) is required as a cofactor.

It localises to the plastid. The protein resides in the chloroplast. It carries out the reaction IMP + L-aspartate + GTP = N(6)-(1,2-dicarboxyethyl)-AMP + GDP + phosphate + 2 H(+). It participates in purine metabolism; AMP biosynthesis via de novo pathway; AMP from IMP: step 1/2. Functionally, plays an important role in the de novo pathway and in the salvage pathway of purine nucleotide biosynthesis. Catalyzes the first committed step in the biosynthesis of AMP from IMP. The chain is Adenylosuccinate synthetase 1, chloroplastic from Capsicum frutescens (Cayenne pepper).